A 293-amino-acid polypeptide reads, in one-letter code: 4-diphosphocytidyl-2-C-methyl-D-erythritol kinase (293 aa).

Lys-11 is an active-site residue. Residue 96 to 106 (PVAAGLGGGSS) participates in ATP binding. Residue Asp-138 is part of the active site.

It belongs to the GHMP kinase family. IspE subfamily.

The enzyme catalyses 4-CDP-2-C-methyl-D-erythritol + ATP = 4-CDP-2-C-methyl-D-erythritol 2-phosphate + ADP + H(+). It functions in the pathway isoprenoid biosynthesis; isopentenyl diphosphate biosynthesis via DXP pathway; isopentenyl diphosphate from 1-deoxy-D-xylulose 5-phosphate: step 3/6. Functionally, catalyzes the phosphorylation of the position 2 hydroxy group of 4-diphosphocytidyl-2C-methyl-D-erythritol. In Xanthobacter autotrophicus (strain ATCC BAA-1158 / Py2), this protein is 4-diphosphocytidyl-2-C-methyl-D-erythritol kinase.